Reading from the N-terminus, the 412-residue chain is Heme chaperone HemW (412 aa).

Residues glycine 4 to alanine 241 enclose the Radical SAM core domain. Residue tyrosine 13 participates in S-adenosyl-L-methionine binding. 3 residues coordinate [2Fe-2S] cluster: cysteine 19, cysteine 23, and cysteine 26. S-adenosyl-L-methionine-binding positions include glycine 72, glycine 73 to threonine 74, glutamate 105, glutamine 132, arginine 144, and aspartate 169.

Belongs to the anaerobic coproporphyrinogen-III oxidase family. HemW subfamily. It depends on [4Fe-4S] cluster as a cofactor.

It localises to the cytoplasm. In terms of biological role, probably acts as a heme chaperone, transferring heme to an unknown acceptor. Binds one molecule of heme per monomer, possibly covalently. Binds 1 [2Fe-2S] cluster. Although this protein has sequence motifs typically found in proteins binding the [4Fe-4S]-AdoMet radical-SAM cluster and S-adenosylmethionine, spectroscopic evidence suggests that a [2Fe-2S] cluster is present; S-adenosylmethionine was not detected. Has no detectable coproporphyrinogen-III oxidase activity. This is Heme chaperone HemW from Synechocystis sp. (strain ATCC 27184 / PCC 6803 / Kazusa).